The following is a 232-amino-acid chain: 7-cyano-7-deazaguanine synthase (232 aa).

8–18 (FSGGQDSTTCL) contributes to the ATP binding site. Zn(2+) contacts are provided by cysteine 187, cysteine 196, cysteine 199, and cysteine 202.

The protein belongs to the QueC family. Zn(2+) serves as cofactor.

The catalysed reaction is 7-carboxy-7-deazaguanine + NH4(+) + ATP = 7-cyano-7-deazaguanine + ADP + phosphate + H2O + H(+). The protein operates within purine metabolism; 7-cyano-7-deazaguanine biosynthesis. In terms of biological role, catalyzes the ATP-dependent conversion of 7-carboxy-7-deazaguanine (CDG) to 7-cyano-7-deazaguanine (preQ(0)). This Vibrio parahaemolyticus serotype O3:K6 (strain RIMD 2210633) protein is 7-cyano-7-deazaguanine synthase.